The sequence spans 318 residues: Aquaporin-1 (318 aa).

Residues Met1–Pro16 show a composition bias toward polar residues. Residues Met1–Gly27 form a disordered region. Residues Met1–Asn36 are Cytoplasmic-facing. Residues Ala37–Ile57 form a helical membrane-spanning segment. Residues Gly58 to Pro77 are Extracellular-facing. The chain crosses the membrane as a helical span at residues Phe78–Phe98. Residues Tyr99–Pro108 are Cytoplasmic-facing. The NPA 1 motif lies at Asn107–Ala109. A helical transmembrane segment spans residues Ala109–Ile129. The Extracellular portion of the chain corresponds to Pro130 to Gln165. Asn159 is a glycosylation site (N-linked (GlcNAc...) asparagine). The helical transmembrane segment at Gly166–Val186 threads the bilayer. Topologically, residues Glu187–His193 are cytoplasmic. Residues Leu194–Thr214 traverse the membrane as a helical segment. At Gly215 to Asp236 the chain is on the extracellular side. Residues Asn219–Ala221 carry the NPA 2 motif. A helical transmembrane segment spans residues Trp237–Phe257. Topologically, residues Lys258–Val318 are cytoplasmic. Residues Gly268–Val318 form a disordered region. A compositionally biased stretch (basic and acidic residues) spans His285–Val305.

This sequence belongs to the MIP/aquaporin (TC 1.A.8) family.

It is found in the nucleus membrane. It carries out the reaction H2O(in) = H2O(out). Functionally, probable water channel involved in responses to changes in environmental conditions and conidiation. Involved in responses to hyperosmotic conditions, oxidative stress and cell wall destabilization. Also required for proper transcriptional activation of genes involved in aurofusarin biosynthesis. Not involved in pathogenicity, but negatively regulates deoxynivalenol (DON) production. The polypeptide is Aquaporin-1 (Gibberella zeae (strain ATCC MYA-4620 / CBS 123657 / FGSC 9075 / NRRL 31084 / PH-1) (Wheat head blight fungus)).